A 184-amino-acid polypeptide reads, in one-letter code: Cytosolic Prostaglandin E synthase (184 aa).

The 90-residue stretch at 7-96 folds into the CS domain; the sequence is LIPPPVSWAQ…AAGPYWSSLT (90 aa). The disordered stretch occupies residues 115 to 184; the sequence is ESDDEEGDQK…EGDKEKKPAA (70 aa). Residues Ser116, Ser127, Ser135, Ser156, and Ser162 each carry the phosphoserine modification. Acidic residues predominate over residues 147–158; the sequence is FNVDDEEEDSDD. Basic and acidic residues predominate over residues 175–184; sequence EGDKEKKPAA.

This sequence belongs to the p23/wos2 family.

The protein resides in the cytoplasm. It carries out the reaction prostaglandin H2 = prostaglandin E2. In terms of biological role, cytosolic prostaglandin synthase that catalyzes the oxidoreduction of prostaglandin endoperoxide H2 (PGH2) to prostaglandin E2 (PGE2). Through production of PGE2 may regulate the activity of non-muscle myosin II in an autocrine or paracrine fashion; this may influence border cell and nurse cell stiffness to facilitate border cell migration during oogenesis. The chain is Cytosolic Prostaglandin E synthase from Drosophila melanogaster (Fruit fly).